Here is a 395-residue protein sequence, read N- to C-terminus: Phosphoprotein (395 aa).

3 disordered regions span residues 34 to 104, 126 to 179, and 192 to 214; these read VGRS…ADEA, NKSS…GTDA, and LSAG…PAPV. Residues 65-74 show a composition bias toward basic and acidic residues; that stretch reads TPDRQDRSDK. Polar residues-rich tracts occupy residues 89 to 98 and 147 to 178; these read PATSTDQPPT and PTQQ…QGTD. Positions 222–285 are multimerization; it reads DFVQAMMSMM…LGMMKILDPG (64 aa).

This sequence belongs to the rubulavirus/avulavirus P protein family. As to quaternary structure, homotetramer. Interacts (via multimerization domain) with polymerase L; this interaction forms the polymerase L-P complex. Interacts (via N-terminus) with N0 (via Ncore); this interaction allows P to chaperon N0 to avoid N polymerization before encapsidation. Interacts (via C-terminus) with N-RNA template; this interaction positions the polymerase on the template for both transcription and replication.

Functionally, essential cofactor of the RNA polymerase L that plays a central role in the transcription and replication by forming the polymerase complex with RNA polymerase L and recruiting L to the genomic N-RNA template for RNA synthesis. Also plays a central role in the encapsidation of nascent RNA chains by forming the encapsidation complex with the nucleocapsid protein N (N-P complex). Acts as a chaperone for newly synthesized free N protein, so-called N0, allowing encapsidation of nascent RNA chains during replication. The nucleoprotein protein N prevents excessive phosphorylation of P, which leads to down-regulation of viral transcription/ replication. Participates, together with N, in the formation of viral factories (viroplasms), which are large inclusions in the host cytoplasm where replication takes place. The polypeptide is Phosphoprotein (P/V) (Newcastle disease virus (strain Ulster/2C) (NDV)).